Consider the following 270-residue polypeptide: Formamidopyrimidine-DNA glycosylase (270 aa).

Pro-2 functions as the Schiff-base intermediate with DNA in the catalytic mechanism. Glu-3 acts as the Proton donor in catalysis. Catalysis depends on Lys-58, which acts as the Proton donor; for beta-elimination activity. DNA contacts are provided by His-91, Arg-110, and Lys-151. An FPG-type zinc finger spans residues 236 to 270 (FAYGRGGQPCKVCGTTLREIKLGQRASVYCPKCQR). Arg-260 serves as the catalytic Proton donor; for delta-elimination activity.

Belongs to the FPG family. As to quaternary structure, monomer. Zn(2+) serves as cofactor.

It carries out the reaction Hydrolysis of DNA containing ring-opened 7-methylguanine residues, releasing 2,6-diamino-4-hydroxy-5-(N-methyl)formamidopyrimidine.. The enzyme catalyses 2'-deoxyribonucleotide-(2'-deoxyribose 5'-phosphate)-2'-deoxyribonucleotide-DNA = a 3'-end 2'-deoxyribonucleotide-(2,3-dehydro-2,3-deoxyribose 5'-phosphate)-DNA + a 5'-end 5'-phospho-2'-deoxyribonucleoside-DNA + H(+). In terms of biological role, involved in base excision repair of DNA damaged by oxidation or by mutagenic agents. Acts as a DNA glycosylase that recognizes and removes damaged bases. Has a preference for oxidized purines, such as 7,8-dihydro-8-oxoguanine (8-oxoG). Has AP (apurinic/apyrimidinic) lyase activity and introduces nicks in the DNA strand. Cleaves the DNA backbone by beta-delta elimination to generate a single-strand break at the site of the removed base with both 3'- and 5'-phosphates. This is Formamidopyrimidine-DNA glycosylase from Pseudomonas syringae pv. tomato (strain ATCC BAA-871 / DC3000).